The chain runs to 129 residues: Glycine cleavage system H protein (129 aa).

The Lipoyl-binding domain occupies 22–103; the sequence is TGTVGITDYA…AHTAWIMKIE (82 aa). Position 63 is an N6-lipoyllysine (lysine 63).

The protein belongs to the GcvH family. The glycine cleavage system is composed of four proteins: P, T, L and H. Requires (R)-lipoate as cofactor.

Its function is as follows. The glycine cleavage system catalyzes the degradation of glycine. The H protein shuttles the methylamine group of glycine from the P protein to the T protein. This chain is Glycine cleavage system H protein, found in Acidobacterium capsulatum (strain ATCC 51196 / DSM 11244 / BCRC 80197 / JCM 7670 / NBRC 15755 / NCIMB 13165 / 161).